Here is a 299-residue protein sequence, read N- to C-terminus: HTH-type transcriptional regulator ArgP (299 aa).

Residues 4 to 60 (LDYKLLLALDAVMQEQNFERAAQRLHITQSAISQRIKQLEQQFAEPLLIRSQPLQAT) form the HTH lysR-type domain. Positions 21–40 (FERAAQRLHITQSAISQRIK) form a DNA-binding region, H-T-H motif.

This sequence belongs to the LysR transcriptional regulatory family. In terms of assembly, homodimer.

Its function is as follows. Controls the transcription of genes involved in arginine and lysine metabolism. This is HTH-type transcriptional regulator ArgP from Aeromonas salmonicida.